The primary structure comprises 165 residues: Ribosome maturation factor RimM (165 aa).

The PRC barrel domain occupies 90–161; that stretch reads EDEYFIVDLV…LITIRPSGEW (72 aa).

Belongs to the RimM family. In terms of assembly, binds ribosomal protein uS19.

Its subcellular location is the cytoplasm. An accessory protein needed during the final step in the assembly of 30S ribosomal subunit, possibly for assembly of the head region. Essential for efficient processing of 16S rRNA. May be needed both before and after RbfA during the maturation of 16S rRNA. It has affinity for free ribosomal 30S subunits but not for 70S ribosomes. In Clostridium perfringens (strain SM101 / Type A), this protein is Ribosome maturation factor RimM.